The primary structure comprises 281 residues: Cis-2,3-dihydrobiphenyl-2,3-diol dehydrogenase (281 aa).

10-34 (ITGGASGLGRALVDRFVAEGARVAV) serves as a coordination point for NAD(+). Ser-142 is a substrate binding site. Tyr-155 functions as the Proton acceptor in the catalytic mechanism.

It belongs to the short-chain dehydrogenases/reductases (SDR) family. As to quaternary structure, homotetramer.

The catalysed reaction is (2R,3S)-3-phenylcyclohexa-3,5-diene-1,2-diol + NAD(+) = biphenyl-2,3-diol + NADH + H(+). The protein operates within xenobiotic degradation; biphenyl degradation; 2-hydroxy-2,4-pentadienoate and benzoate from biphenyl: step 2/4. This Comamonas testosteroni (Pseudomonas testosteroni) protein is Cis-2,3-dihydrobiphenyl-2,3-diol dehydrogenase (bphB).